A 755-amino-acid polypeptide reads, in one-letter code: Protein MTSS 1 (755 aa).

An IMD domain is found at methionine 1 to serine 250. Residues leucine 108–arginine 155 adopt a coiled-coil conformation. Disordered regions lie at residues lysine 139 to glutamine 159 and serine 255 to asparagine 305. The residue at position 258 (threonine 258) is a Phosphothreonine. Phosphoserine is present on residues serine 261, serine 262, serine 271, and serine 322. Positions glutamine 327–serine 351 are disordered. Threonine 425 carries the phosphothreonine modification. 3 disordered regions span residues arginine 428 to glycine 470, aspartate 490 to cysteine 513, and glutamine 563 to serine 755. Residues threonine 443 to glutamate 453 show a composition bias toward low complexity. At threonine 603 the chain carries Phosphothreonine. The span at proline 608–valine 623 shows a compositional bias: low complexity. Serine 644 and serine 647 each carry phosphoserine. A compositionally biased stretch (polar residues) spans glycine 656–valine 671. In terms of domain architecture, WH2 spans glutamine 727–threonine 744.

Belongs to the MTSS family. As to quaternary structure, binds to actin. Binds to the cytoplasmic domain of receptor protein tyrosine phosphatase delta. As to expression, expressed in many tissues, including spleen, thymus, prostate, testis, uterus, colon, and peripheral blood.

The protein resides in the cytoplasm. It is found in the cytoskeleton. In terms of biological role, may be related to cancer progression or tumor metastasis in a variety of organ sites, most likely through an interaction with the actin cytoskeleton. This Homo sapiens (Human) protein is Protein MTSS 1.